Here is a 99-residue protein sequence, read N- to C-terminus: DNA-binding protein HmvA (99 aa).

An interaction with DNA region spans residues 52–55; the sequence is KTIK.

The protein belongs to the archaeal histone HMF family. Homodimer or heterodimer with another histone. Dimers then assemble into higher oligomers, with the DNA wrapped around the protein core.

It is found in the cytoplasm. Its subcellular location is the chromosome. Its function is as follows. Binds and compact DNA (95 to 150 base pairs) to form nucleosome-like structures that contain positive DNA supercoils. Increases the resistance of DNA to thermal denaturation (in vitro). The polypeptide is DNA-binding protein HmvA (hmvA) (Methanococcus voltae).